The sequence spans 616 residues: Dihydroxy-acid dehydratase (616 aa).

Mg(2+) is bound at residue aspartate 81. Cysteine 122 is a [2Fe-2S] cluster binding site. Positions 123 and 124 each coordinate Mg(2+). Lysine 124 carries the post-translational modification N6-carboxylysine. Cysteine 197 lines the [2Fe-2S] cluster pocket. Glutamate 493 contacts Mg(2+). The Proton acceptor role is filled by serine 519.

The protein belongs to the IlvD/Edd family. As to quaternary structure, homodimer. Requires [2Fe-2S] cluster as cofactor. Mg(2+) is required as a cofactor.

It catalyses the reaction (2R)-2,3-dihydroxy-3-methylbutanoate = 3-methyl-2-oxobutanoate + H2O. It carries out the reaction (2R,3R)-2,3-dihydroxy-3-methylpentanoate = (S)-3-methyl-2-oxopentanoate + H2O. It functions in the pathway amino-acid biosynthesis; L-isoleucine biosynthesis; L-isoleucine from 2-oxobutanoate: step 3/4. It participates in amino-acid biosynthesis; L-valine biosynthesis; L-valine from pyruvate: step 3/4. In terms of biological role, functions in the biosynthesis of branched-chain amino acids. Catalyzes the dehydration of (2R,3R)-2,3-dihydroxy-3-methylpentanoate (2,3-dihydroxy-3-methylvalerate) into 2-oxo-3-methylpentanoate (2-oxo-3-methylvalerate) and of (2R)-2,3-dihydroxy-3-methylbutanoate (2,3-dihydroxyisovalerate) into 2-oxo-3-methylbutanoate (2-oxoisovalerate), the penultimate precursor to L-isoleucine and L-valine, respectively. The polypeptide is Dihydroxy-acid dehydratase (Corynebacterium kroppenstedtii (strain DSM 44385 / JCM 11950 / CIP 105744 / CCUG 35717)).